Reading from the N-terminus, the 89-residue chain is Small ribosomal subunit protein uS15 (89 aa).

Belongs to the universal ribosomal protein uS15 family. Part of the 30S ribosomal subunit. Forms a bridge to the 50S subunit in the 70S ribosome, contacting the 23S rRNA.

Its function is as follows. One of the primary rRNA binding proteins, it binds directly to 16S rRNA where it helps nucleate assembly of the platform of the 30S subunit by binding and bridging several RNA helices of the 16S rRNA. Functionally, forms an intersubunit bridge (bridge B4) with the 23S rRNA of the 50S subunit in the ribosome. The sequence is that of Small ribosomal subunit protein uS15 from Haemophilus influenzae (strain PittGG).